The sequence spans 611 residues: Chaperone protein DnaK (611 aa).

Threonine 173 carries the post-translational modification Phosphothreonine; by autocatalysis. Positions 577–592 (QAAAGQAEGAEGAQDA) are enriched in low complexity. The tract at residues 577 to 598 (QAAAGQAEGAEGAQDAGAKKDN) is disordered.

The protein belongs to the heat shock protein 70 family.

Its function is as follows. Acts as a chaperone. The protein is Chaperone protein DnaK of Bacillus anthracis (strain A0248).